Here is a 280-residue protein sequence, read N- to C-terminus: AYGVVYKARDIETNEDIALKKIRLEQEDEGVPSTAIREISLLKEMHHENIVNLKDVVHREKRLYLVFEYLDLDLKKHMDSCPEFSQDLHMVKMFLCQILRGVAYCHSHRVLHRDLKPQNLLIDRGSNTIKLADFGLARAFGIPVRTFTHEVVTLWYRAPEVLLGSRHYSTPVDVWSVGCIFAEMVNQKPLFPGDSEIDELHKIFRIIGTPNEDIWPGVTSLPDFKSSFPKWPPKELATIVPNLGATGLDLLCKMLQLDPSKRITAKKALEHEYFKDIVLP.

ATP is bound by residues 1–5 (AYGVV) and K20. Residues 1–274 (AYGVVYKARD…AKKALEHEYF (274 aa)) form the Protein kinase domain. Residue Y2 is modified to Phosphotyrosine. D114 serves as the catalytic Proton acceptor. Residue T148 is modified to Phosphothreonine; by CAK.

The protein belongs to the protein kinase superfamily. CMGC Ser/Thr protein kinase family. CDC2/CDKX subfamily.

It carries out the reaction L-seryl-[protein] + ATP = O-phospho-L-seryl-[protein] + ADP + H(+). The enzyme catalyses L-threonyl-[protein] + ATP = O-phospho-L-threonyl-[protein] + ADP + H(+). The catalysed reaction is [DNA-directed RNA polymerase] + ATP = phospho-[DNA-directed RNA polymerase] + ADP + H(+). With respect to regulation, phosphorylation at Tyr-2 inactivates the enzyme, while phosphorylation at Thr-148 activates it. In terms of biological role, plays a key role in the control of the eukaryotic cell cycle. This is Cell division control protein 2 homolog B (CDC2B) from Antirrhinum majus (Garden snapdragon).